The following is a 436-amino-acid chain: UDP-N-acetylmuramate--L-alanine ligase (436 aa).

111-117 (GTHGKTS) contributes to the ATP binding site.

Belongs to the MurCDEF family.

It localises to the cytoplasm. The catalysed reaction is UDP-N-acetyl-alpha-D-muramate + L-alanine + ATP = UDP-N-acetyl-alpha-D-muramoyl-L-alanine + ADP + phosphate + H(+). It participates in cell wall biogenesis; peptidoglycan biosynthesis. Cell wall formation. In Lactiplantibacillus plantarum (strain ATCC BAA-793 / NCIMB 8826 / WCFS1) (Lactobacillus plantarum), this protein is UDP-N-acetylmuramate--L-alanine ligase.